The chain runs to 192 residues: Ion-translocating oxidoreductase complex subunit B (192 aa).

The interval 1–26 is hydrophobic; the sequence is MNAIWIAVAAVSLLGLAFGAILGYAS. The 60-residue stretch at 32 to 91 folds into the 4Fe-4S domain; sequence EDDPVVEKIDEILPQSQCGQCGYPGCRPYAEAISCNGEKINRCAPGGEAVMLKIAELLNV. Positions 49, 52, 57, 74, 117, 120, 123, 127, 147, 150, 153, and 157 each coordinate [4Fe-4S] cluster. 4Fe-4S ferredoxin-type domains lie at 108-137 and 138-167; these read MVAFIDENNCIGCTKCIQACPVDAIVGATR and AMHTVMSDLCTGCNLCVDPCPTHCISLQPV.

The protein belongs to the 4Fe4S bacterial-type ferredoxin family. RnfB subfamily. In terms of assembly, the complex is composed of six subunits: RsxA, RsxB, RsxC, RsxD, RsxE and RsxG. [4Fe-4S] cluster is required as a cofactor.

It localises to the cell inner membrane. Its function is as follows. Part of a membrane-bound complex that couples electron transfer with translocation of ions across the membrane. Required to maintain the reduced state of SoxR. In Escherichia coli O17:K52:H18 (strain UMN026 / ExPEC), this protein is Ion-translocating oxidoreductase complex subunit B.